The chain runs to 404 residues: Protein IQ-DOMAIN 12 (404 aa).

Residues 8–25 are calmodulin-binding; the sequence is FGWMKRLFICEAKARAEK. Positions 11–18 match the Nuclear localization signal 1 motif; sequence MKRLFICE. IQ domains follow at residues 108 to 135 and 136 to 158; these read NVAA…ALVR and LQAI…SSHS. The Nuclear localization signal 2 signature appears at 226–233; it reads IKRDRMLK.

Belongs to the IQD family. Binds to multiple calmodulin (CaM) in the presence of Ca(2+) and CaM-like proteins.

The protein resides in the nucleus. It localises to the cell membrane. Functionally, may be involved in cooperative interactions with calmodulins or calmodulin-like proteins. Recruits calmodulin proteins to microtubules, thus being a potential scaffold in cellular signaling and trafficking. May associate with nucleic acids and regulate gene expression at the transcriptional or post-transcriptional level. The chain is Protein IQ-DOMAIN 12 from Arabidopsis thaliana (Mouse-ear cress).